A 433-amino-acid polypeptide reads, in one-letter code: FAD-dependent monooxygenase notI (433 aa).

FAD contacts are provided by Glu-45 and Arg-117. Residue Arg-195 is part of the active site. 2 residues coordinate FAD: Asp-314 and Ala-327.

This sequence belongs to the paxM FAD-dependent monooxygenase family. The cofactor is FAD.

Its pathway is alkaloid biosynthesis. Functionally, FAD-dependent monooxygenase; part of the gene cluster that mediates the biosynthesis of notoamide, a fungal indole alkaloid that belongs to a family of natural products containing a characteristic bicyclo[2.2.2]diazaoctane core. The first step of notoamide biosynthesis involves coupling of L-proline and L-tryptophan by the bimodular NRPS notE, to produce cyclo-L-tryptophan-L-proline called brevianamide F. The reverse prenyltransferase notF then acts as a deoxybrevianamide E synthase and converts brevianamide F to deoxybrevianamide E via reverse prenylation at C-2 of the indole ring leading to the bicyclo[2.2.2]diazaoctane core. Deoxybrevianamide E is further hydroxylated at C-6 of the indole ring, likely catalyzed by the cytochrome P450 monooxygenase notG, to yield 6-hydroxy-deoxybrevianamide E. 6-hydroxy-deoxybrevianamide E is a specific substrate of the prenyltransferase notC for normal prenylation at C-7 to produce 6-hydroxy-7-prenyl-deoxybrevianamide, also called notoamide S. As the proposed pivotal branching point in notoamide biosynthesis, notoamide S can be diverted to notoamide E through an oxidative pyran ring closure putatively catalyzed by either notH cytochrome P450 monooxygenase or the notD FAD-linked oxidoreductase. This step would be followed by an indole 2,3-epoxidation-initiated pinacol-like rearrangement catalyzed by the notB FAD-dependent monooxygenase leading to the formation of notoamide C and notoamide D. On the other hand notoamide S is converted to notoamide T by notH (or notD), a bifunctional oxidase that also functions as the intramolecular Diels-Alderase responsible for generation of (+)-notoamide T. To generate antipodal (-)-notoaminide T, notH' (or notD') in Aspergillus versicolor is expected to catalyze a Diels-Alder reaction leading to the opposite stereochemistry. The remaining oxidoreductase notD (or notH) likely catalyzes the oxidative pyran ring formation to yield (+)-stephacidin A. The FAD-dependent monooxygenase notI is highly similar to notB and is predicted to catalyze a similar conversion from (+)-stephacidin A to (-)-notoamide B via the 2,3-epoxidation of (+)-stephacidin A followed by a pinacol-type rearrangement. Finally, it remains unclear which enzyme could be responsible for the final hydroxylation steps leading to notoamide A and sclerotiamide. This is FAD-dependent monooxygenase notI from Aspergillus sp. (strain MF297-2).